The primary structure comprises 130 residues: MSATQNYGTGRRKTATARVFLRPGTGNISINNRPLDTFFGRETARMVVRQPLELTESTEKFDIYVTVAGGGVSGQAGAIRHGITRALMEYDETLRGALRRAGYVTRDAREVERKKVGLRKARKRPQYSKR.

The protein belongs to the universal ribosomal protein uS9 family.

In Pseudomonas putida (strain W619), this protein is Small ribosomal subunit protein uS9.